The chain runs to 378 residues: Lipid-A-disaccharide synthase (378 aa).

It belongs to the LpxB family.

The catalysed reaction is a lipid X + a UDP-2-N,3-O-bis[(3R)-3-hydroxyacyl]-alpha-D-glucosamine = a lipid A disaccharide + UDP + H(+). It functions in the pathway bacterial outer membrane biogenesis; LPS lipid A biosynthesis. Its function is as follows. Condensation of UDP-2,3-diacylglucosamine and 2,3-diacylglucosamine-1-phosphate to form lipid A disaccharide, a precursor of lipid A, a phosphorylated glycolipid that anchors the lipopolysaccharide to the outer membrane of the cell. This is Lipid-A-disaccharide synthase from Pseudomonas aeruginosa (strain LESB58).